The primary structure comprises 226 residues: Putative N-acetylmannosamine-6-phosphate 2-epimerase 1 (226 aa).

The protein belongs to the NanE family.

It carries out the reaction an N-acyl-D-glucosamine 6-phosphate = an N-acyl-D-mannosamine 6-phosphate. It functions in the pathway amino-sugar metabolism; N-acetylneuraminate degradation; D-fructose 6-phosphate from N-acetylneuraminate: step 3/5. Its function is as follows. Converts N-acetylmannosamine-6-phosphate (ManNAc-6-P) to N-acetylglucosamine-6-phosphate (GlcNAc-6-P). The protein is Putative N-acetylmannosamine-6-phosphate 2-epimerase 1 (nanE1) of Salmonella typhimurium (strain LT2 / SGSC1412 / ATCC 700720).